We begin with the raw amino-acid sequence, 158 residues long: NADPH-dependent 7-cyano-7-deazaguanine reductase (158 aa).

The active-site Thioimide intermediate is Cys-56. Asp-63 functions as the Proton donor in the catalytic mechanism. Substrate is bound by residues 78 to 80 (LES) and 97 to 98 (HE).

It belongs to the GTP cyclohydrolase I family. QueF type 1 subfamily.

The protein localises to the cytoplasm. The catalysed reaction is 7-aminomethyl-7-carbaguanine + 2 NADP(+) = 7-cyano-7-deazaguanine + 2 NADPH + 3 H(+). Its pathway is tRNA modification; tRNA-queuosine biosynthesis. In terms of biological role, catalyzes the NADPH-dependent reduction of 7-cyano-7-deazaguanine (preQ0) to 7-aminomethyl-7-deazaguanine (preQ1). The protein is NADPH-dependent 7-cyano-7-deazaguanine reductase of Nitrobacter hamburgensis (strain DSM 10229 / NCIMB 13809 / X14).